The chain runs to 324 residues: D-erythronate dehydrogenase (324 aa).

NAD(+)-binding residues include serine 125, tyrosine 149, and lysine 153. Tyrosine 149 serves as the catalytic Proton acceptor.

The protein belongs to the NAD(P)-dependent epimerase/dehydratase family.

It catalyses the reaction D-erythronate + NAD(+) = 2-dehydro-D-erythronate + NADH + H(+). Catalyzes oxidation of D-erythronate to 2-oxo-tetronate. Can use either NAD(+) or NADP(+) as cosubstrate, with a preference for NAD(+). The chain is D-erythronate dehydrogenase from Cupriavidus necator (strain ATCC 17699 / DSM 428 / KCTC 22496 / NCIMB 10442 / H16 / Stanier 337) (Ralstonia eutropha).